The chain runs to 546 residues: Chaperonin GroEL 2 (546 aa).

Residues 30–33, K51, 87–91, G415, and D495 contribute to the ATP site; these read TLGP and DGTTT.

Belongs to the chaperonin (HSP60) family. In terms of assembly, forms a cylinder of 14 subunits composed of two heptameric rings stacked back-to-back. Interacts with the co-chaperonin GroES.

The protein localises to the cytoplasm. The enzyme catalyses ATP + H2O + a folded polypeptide = ADP + phosphate + an unfolded polypeptide.. In terms of biological role, together with its co-chaperonin GroES, plays an essential role in assisting protein folding. The GroEL-GroES system forms a nano-cage that allows encapsulation of the non-native substrate proteins and provides a physical environment optimized to promote and accelerate protein folding. In Burkholderia cenocepacia (strain HI2424), this protein is Chaperonin GroEL 2.